The chain runs to 124 residues: Large ribosomal subunit protein bL12 (124 aa).

It belongs to the bacterial ribosomal protein bL12 family. As to quaternary structure, homodimer. Part of the ribosomal stalk of the 50S ribosomal subunit. Forms a multimeric L10(L12)X complex, where L10 forms an elongated spine to which 2 to 4 L12 dimers bind in a sequential fashion. Binds GTP-bound translation factors.

Forms part of the ribosomal stalk which helps the ribosome interact with GTP-bound translation factors. Is thus essential for accurate translation. The protein is Large ribosomal subunit protein bL12 of Cupriavidus pinatubonensis (strain JMP 134 / LMG 1197) (Cupriavidus necator (strain JMP 134)).